Reading from the N-terminus, the 438-residue chain is Enolase 1 (438 aa).

Substrate is bound by residues His160 and Glu169. Residue Glu212 is the Proton donor of the active site. The Mg(2+) site is built by Asp247, Glu296, and Asp321. Residues Glu296 and Asp321 each coordinate substrate. The active-site Proton acceptor is Lys346. Residues 373–376 (SHRS) and Lys397 contribute to the substrate site.

The protein belongs to the enolase family. Homodimer. Mg(2+) serves as cofactor.

The protein localises to the cytoplasm. The enzyme catalyses (2R)-2-phosphoglycerate = phosphoenolpyruvate + H2O. Its pathway is carbohydrate degradation; glycolysis; pyruvate from D-glyceraldehyde 3-phosphate: step 4/5. This Candida glabrata (strain ATCC 2001 / BCRC 20586 / JCM 3761 / NBRC 0622 / NRRL Y-65 / CBS 138) (Yeast) protein is Enolase 1 (ENO1).